Consider the following 37-residue polypeptide: Large ribosomal subunit protein bL36c (37 aa).

It belongs to the bacterial ribosomal protein bL36 family.

It is found in the plastid. The sequence is that of Large ribosomal subunit protein bL36c (rpl36) from Euglena longa (Euglenophycean alga).